The sequence spans 368 residues: RNA polymerase sigma factor SigA (368 aa).

A disordered region spans residues 69 to 90 (LVNEKDSSDTDEKLNPSDLSAP). Residues 71-83 (NEKDSSDTDEKLN) are compositionally biased toward basic and acidic residues. The interval 135–205 (LAEANLRLVV…TRAIADQART (71 aa)) is sigma-70 factor domain-2. The Interaction with polymerase core subunit RpoC motif lies at 159–162 (DLIQ). Residues 214 to 290 (ETINKLIRVQ…DQEAQSPSDH (77 aa)) form a sigma-70 factor domain-3 region. Positions 303–356 (VLDTLTDREENVLRLRFGLDDGRTRTLEEVGKVFGVTRERIRQIEAKALRKLRH) are sigma-70 factor domain-4. Residues 329–348 (LEEVGKVFGVTRERIRQIEA) constitute a DNA-binding region (H-T-H motif).

The protein belongs to the sigma-70 factor family. RpoD/SigA subfamily. Interacts transiently with the RNA polymerase catalytic core.

The protein resides in the cytoplasm. Its function is as follows. Sigma factors are initiation factors that promote the attachment of RNA polymerase to specific initiation sites and are then released. This sigma factor is the primary sigma factor during exponential growth. The chain is RNA polymerase sigma factor SigA from Staphylococcus aureus (strain N315).